A 104-amino-acid chain; its full sequence is ATP-dependent Clp protease adapter protein ClpS (104 aa).

Belongs to the ClpS family. In terms of assembly, binds to the N-terminal domain of the chaperone ClpA.

Involved in the modulation of the specificity of the ClpAP-mediated ATP-dependent protein degradation. This chain is ATP-dependent Clp protease adapter protein ClpS, found in Bordetella bronchiseptica (strain ATCC BAA-588 / NCTC 13252 / RB50) (Alcaligenes bronchisepticus).